Reading from the N-terminus, the 216-residue chain is UPF0548 protein (216 aa).

Belongs to the UPF0548 family.

The protein is UPF0548 protein of Dictyostelium discoideum (Social amoeba).